A 242-amino-acid polypeptide reads, in one-letter code: 1-(5-phosphoribosyl)-5-[(5-phosphoribosylamino)methylideneamino] imidazole-4-carboxamide isomerase (242 aa).

Aspartate 8 acts as the Proton acceptor in catalysis. Aspartate 129 functions as the Proton donor in the catalytic mechanism.

This sequence belongs to the HisA/HisF family.

Its subcellular location is the cytoplasm. It carries out the reaction 1-(5-phospho-beta-D-ribosyl)-5-[(5-phospho-beta-D-ribosylamino)methylideneamino]imidazole-4-carboxamide = 5-[(5-phospho-1-deoxy-D-ribulos-1-ylimino)methylamino]-1-(5-phospho-beta-D-ribosyl)imidazole-4-carboxamide. The protein operates within amino-acid biosynthesis; L-histidine biosynthesis; L-histidine from 5-phospho-alpha-D-ribose 1-diphosphate: step 4/9. This is 1-(5-phosphoribosyl)-5-[(5-phosphoribosylamino)methylideneamino] imidazole-4-carboxamide isomerase from Clostridium botulinum (strain Okra / Type B1).